We begin with the raw amino-acid sequence, 382 residues long: Glutamyl-tRNA reductase (382 aa).

Substrate contacts are provided by residues 38-41 (TCNR), serine 85, 90-92 (ENQ), and glutamine 96. Residue cysteine 39 is the Nucleophile of the active site. 164-169 (GAGEIG) is a binding site for NADP(+).

It belongs to the glutamyl-tRNA reductase family. As to quaternary structure, homodimer.

The catalysed reaction is (S)-4-amino-5-oxopentanoate + tRNA(Glu) + NADP(+) = L-glutamyl-tRNA(Glu) + NADPH + H(+). It participates in porphyrin-containing compound metabolism; protoporphyrin-IX biosynthesis; 5-aminolevulinate from L-glutamyl-tRNA(Glu): step 1/2. Catalyzes the NADPH-dependent reduction of glutamyl-tRNA(Glu) to glutamate 1-semialdehyde (GSA). The protein is Glutamyl-tRNA reductase of Methanococcus maripaludis (strain C7 / ATCC BAA-1331).